The following is a 132-amino-acid chain: Large ribosomal subunit protein bL17 (132 aa).

The protein belongs to the bacterial ribosomal protein bL17 family. Part of the 50S ribosomal subunit. Contacts protein L32.

This is Large ribosomal subunit protein bL17 from Albidiferax ferrireducens (strain ATCC BAA-621 / DSM 15236 / T118) (Rhodoferax ferrireducens).